A 561-amino-acid chain; its full sequence is Potassium-transporting ATPase potassium-binding subunit (561 aa).

The next 10 membrane-spanning stretches (helical) occupy residues 4 to 24 (IVMQ…PLGI), 65 to 85 (AVSV…VLML), 133 to 153 (IGLT…LFAV), 177 to 197 (LYIL…QGVV), 253 to 273 (FTNL…VVMF), 285 to 305 (AIMT…TISE), 380 to 400 (GLYG…LLVG), 417 to 437 (MVCL…AVAV), 484 to 504 (MVGA…ALYL), and 528 to 548 (FIGL…LPAL).

This sequence belongs to the KdpA family. As to quaternary structure, the system is composed of three essential subunits: KdpA, KdpB and KdpC.

It is found in the cell membrane. Functionally, part of the high-affinity ATP-driven potassium transport (or Kdp) system, which catalyzes the hydrolysis of ATP coupled with the electrogenic transport of potassium into the cytoplasm. This subunit binds the extracellular potassium ions and delivers the ions to the membrane domain of KdpB through an intramembrane tunnel. This is Potassium-transporting ATPase potassium-binding subunit from Listeria monocytogenes serovar 1/2a (strain ATCC BAA-679 / EGD-e).